The chain runs to 730 residues: Patatin-like phospholipase domain-containing protein CIMG_04897 (730 aa).

A compositionally biased stretch (basic residues) spans 1 to 11; it reads MTANSSRRRLQ. Residues 1–26 are disordered; it reads MTANSSRRRLQMKSPRTDGDEKEEDY. A helical transmembrane segment spans residues 97-117; that stretch reads WPFLLFVLSWIVFLGALYILT. Residues 281–472 form the PNPLA domain; that stretch reads LCLSGGATLA…RTDIPLKALD (192 aa). Positions 312–316 match the GXSXG motif; sequence GTSGG. Ser314 serves as the catalytic Nucleophile. Catalysis depends on Asp459, which acts as the Proton acceptor. Residues 667–730 form a disordered region; that stretch reads GHFREAPTSH…QGQSSGTKIG (64 aa). Over residues 721-730 the composition is skewed to polar residues; sequence QGQSSGTKIG.

It belongs to the PLPL family.

It localises to the membrane. Functionally, probable lipid hydrolase. The sequence is that of Patatin-like phospholipase domain-containing protein CIMG_04897 from Coccidioides immitis (strain RS) (Valley fever fungus).